Reading from the N-terminus, the 239-residue chain is Uridylate kinase (239 aa).

Position 12–15 (12–15) interacts with ATP; the sequence is KLSG. Residues 21 to 26 are involved in allosteric activation by GTP; it reads GEQGFG. Glycine 55 contributes to the UMP binding site. ATP-binding residues include glycine 56 and arginine 60. Residues aspartate 75 and 136 to 143 contribute to the UMP site; that span reads TGNPYFST. 3 residues coordinate ATP: threonine 163, tyrosine 169, and aspartate 172.

This sequence belongs to the UMP kinase family. In terms of assembly, homohexamer.

It is found in the cytoplasm. It carries out the reaction UMP + ATP = UDP + ADP. The protein operates within pyrimidine metabolism; CTP biosynthesis via de novo pathway; UDP from UMP (UMPK route): step 1/1. Allosterically activated by GTP. Inhibited by UTP. Functionally, catalyzes the reversible phosphorylation of UMP to UDP. This is Uridylate kinase from Koribacter versatilis (strain Ellin345).